The chain runs to 348 residues: Phosphoribosylformylglycinamidine cyclo-ligase (348 aa).

Belongs to the AIR synthase family.

Its subcellular location is the cytoplasm. It catalyses the reaction 2-formamido-N(1)-(5-O-phospho-beta-D-ribosyl)acetamidine + ATP = 5-amino-1-(5-phospho-beta-D-ribosyl)imidazole + ADP + phosphate + H(+). It participates in purine metabolism; IMP biosynthesis via de novo pathway; 5-amino-1-(5-phospho-D-ribosyl)imidazole from N(2)-formyl-N(1)-(5-phospho-D-ribosyl)glycinamide: step 2/2. The protein is Phosphoribosylformylglycinamidine cyclo-ligase of Citrifermentans bemidjiense (strain ATCC BAA-1014 / DSM 16622 / JCM 12645 / Bem) (Geobacter bemidjiensis).